The sequence spans 391 residues: MLASYASDPLKSRGRLYKEIPTSYRNEFECDRDRIINTNAFRRLQYKTQVFINHEGDHYRNRLTHSLEVSTVARSVANTLNLSSDLAETIALAHDLGHTPFGHAGERALNECMKEYSGFSHNAQSLKILTLLEKRYAAYNGVNLTWEVLEGIIKHNGPITGEINEYIAEYNKQNDLELSTYASAEAQIASLADDISYISHDLEDSIGAKIIDFNSLAELKYIDQHVFELKSKFKNISSSCLIYEVVRKLMHELITDLLWQTKENLNKEKIINIYEIRHLNYQIVDFTEKTNDRIKETKKFLHERVYKSNKITAISLKCTKIVQGLFKVYMDDINLLPVNWKMLIDSDDTYSKARVIADYIAGMTDRFAIQEYNQLCSLNFNNILKLNYEYI.

The 137-residue stretch at Arg62–Ile198 folds into the HD domain.

This sequence belongs to the dGTPase family. Type 2 subfamily.

The polypeptide is Deoxyguanosinetriphosphate triphosphohydrolase-like protein (Rickettsia akari (strain Hartford)).